The chain runs to 714 residues: 2'-5'-oligoadenylate synthase 2 (714 aa).

Residue Gly-2 is the site of N-myristoyl glycine attachment. OAS domain stretches follow at residues 11–336 and 344–683; these read KPSE…SWNV and TPGH…WNVP. Ser-397 is an ATP binding site. Mg(2+)-binding residues include Asp-409 and Asp-480. The ATP site is built by Arg-544 and Lys-547.

The protein belongs to the 2-5A synthase family. In terms of assembly, homodimer. Mg(2+) serves as cofactor. Myristoylation is not essential for its activity. Post-translationally, glycosylated. Glycosylation is essential for its activity.

The protein resides in the cytoplasm. It is found in the perinuclear region. The enzyme catalyses 3 ATP = 5'-triphosphoadenylyl-(2'-&gt;5')-adenylyl-(2'-&gt;5')-adenosine + 2 diphosphate. With respect to regulation, produced as a latent enzyme which is activated by double stranded RNA (dsRNA) generated during the course of viral infection. The dsRNA activator must be at least 15 nucleotides long, and no modification of the 2'-hydroxyl group is tolerated. ssRNA or dsDNA do not act as activators. Strongly inhibited by copper, iron and zinc ions. Partially inhibited by cobalt and nickel ions. In terms of biological role, interferon-induced, dsRNA-activated antiviral enzyme which plays a critical role in cellular innate antiviral response. Activated by detection of double stranded RNA (dsRNA): polymerizes higher oligomers of 2'-5'-oligoadenylates (2-5A) from ATP which then bind to the inactive monomeric form of ribonuclease L (RNASEL) leading to its dimerization and subsequent activation. Activation of RNASEL leads to degradation of cellular as well as viral RNA, resulting in the inhibition of protein synthesis, thus terminating viral replication. Can mediate the antiviral effect via the classical RNASEL-dependent pathway or an alternative antiviral pathway independent of RNASEL. In addition, it may also play a role in other cellular processes such as apoptosis, cell growth, differentiation and gene regulation. May act as a negative regulator of lactation, stopping lactation in virally infected mammary gland lobules, thereby preventing transmission of viruses to neonates. Non-infected lobules would not be affected, allowing efficient pup feeding during infection. This Bos taurus (Bovine) protein is 2'-5'-oligoadenylate synthase 2 (OAS2).